The following is a 549-amino-acid chain: Hydroxylamine reductase (549 aa).

[4Fe-4S] cluster is bound by residues cysteine 3, cysteine 6, cysteine 15, and cysteine 21. Residues histidine 248, glutamate 272, cysteine 316, cysteine 403, cysteine 431, cysteine 456, glutamate 490, and lysine 492 each coordinate hybrid [4Fe-2O-2S] cluster. Cysteine 403 is modified (cysteine persulfide).

The protein belongs to the HCP family. [4Fe-4S] cluster serves as cofactor. Requires hybrid [4Fe-2O-2S] cluster as cofactor.

It localises to the cytoplasm. It carries out the reaction A + NH4(+) + H2O = hydroxylamine + AH2 + H(+). In terms of biological role, catalyzes the reduction of hydroxylamine to form NH(3) and H(2)O. The chain is Hydroxylamine reductase from Rhodospirillum rubrum (strain ATCC 11170 / ATH 1.1.1 / DSM 467 / LMG 4362 / NCIMB 8255 / S1).